The primary structure comprises 135 residues: Transcriptional activator protein (135 aa).

A Nuclear localization signal motif is present at residues 17-32 (KVQHKIAKKKPIRRKR). A zinc finger spans residues 37 to 54 (CGCSYYLHLNCNNHGFTH). Polar residues-rich tracts occupy residues 77-87 (LFQDNRTQPEA) and 101-115 (IQPQ…SQMF). The segment at 77–117 (LFQDNRTQPEAISNEPRHHFHSDKIQPQHQEGNGDSQMFSR) is disordered. The tract at residues 120–135 (NLDDITASDWSFLKSI) is transactivation.

The protein belongs to the geminiviridae transcriptional activator protein family. As to quaternary structure, monomer. Homodimer. Homooligomer. Self-interaction correlates with nuclear localization and efficient activation of transcription. Monomers suppress local silencing by interacting with and inactivating host adenosine kinase 2 (ADK2) in the cytoplasm. Interacts with and inhibits host SNF1 kinase. Binds to ssDNA. May interact with host RPS27A. Post-translationally, phosphorylated.

It is found in the host nucleus. The protein resides in the host cytoplasm. Multifunctional protein that modulates host antiviral defenses and promotes host attractiveness to insect vectors. Acts as a suppressor of RNA-mediated gene silencing, also known as post-transcriptional gene silencing (PTGS), a mechanism of plant viral defense that limits the accumulation of viral RNAs. TrAP suppresses the host RNA silencing by inhibiting adenosine kinase 2 (ADK2), a kinase involved in a general methylation pathway. Also suppresses the host basal defense by interacting with and inhibiting SNF1 kinase, a key regulator of cell metabolism implicated in innate antiviral defense. In terms of biological role, inhibits signal transduction by the phytohormone jasmonate, making the infected plant more attractive to aphids, which are the second host to play a role as a dissemination vector. Acts by binding to ubiquitin precursor RPS27A, thereby preventing ubiquitin degradation of JAZ. The polypeptide is Transcriptional activator protein (Tomato yellow leaf curl virus (strain Israel) (TYLCV)).